The sequence spans 276 residues: Diaminopimelate epimerase (276 aa).

Substrate is bound by residues Asn13, Gln46, and Asn66. Residue Cys75 is the Proton donor of the active site. Residues 76–77, Asn159, Asn192, and 210–211 each bind substrate; these read GN and ER. Residue Cys219 is the Proton acceptor of the active site. 220 to 221 lines the substrate pocket; it reads GT.

The protein belongs to the diaminopimelate epimerase family. Homodimer.

It is found in the cytoplasm. It carries out the reaction (2S,6S)-2,6-diaminopimelate = meso-2,6-diaminopimelate. It participates in amino-acid biosynthesis; L-lysine biosynthesis via DAP pathway; DL-2,6-diaminopimelate from LL-2,6-diaminopimelate: step 1/1. In terms of biological role, catalyzes the stereoinversion of LL-2,6-diaminopimelate (L,L-DAP) to meso-diaminopimelate (meso-DAP), a precursor of L-lysine and an essential component of the bacterial peptidoglycan. This is Diaminopimelate epimerase from Pseudomonas aeruginosa (strain UCBPP-PA14).